A 218-amino-acid polypeptide reads, in one-letter code: UPF0758 protein SAUSA300_1608 (218 aa).

In terms of domain architecture, MPN spans 92–214 (KITQPSDVAD…FTSLVEAGYF (123 aa)). Positions 163, 165, and 176 each coordinate Zn(2+). Positions 163 to 176 (HNHPSGDVTPSQED) match the JAMM motif motif.

This sequence belongs to the UPF0758 family.

This chain is UPF0758 protein SAUSA300_1608, found in Staphylococcus aureus (strain USA300).